An 808-amino-acid chain; its full sequence is TBC1 domain family member 10B (808 aa).

3 disordered regions span residues 1–38, 60–225, and 237–264; these read METGTAPLVAPPRRHGAPAAPSPPPRGSRAGPVVVVAP, PAWV…GTCE, and PEPAENSQDLGSTSSLGPGISGPRGQAP. A Phosphoserine modification is found at serine 22. Over residues 27–38 the composition is skewed to low complexity; that stretch reads GSRAGPVVVVAP. The segment covering 100–112 has biased composition (pro residues); the sequence is APKPQLPSGPESP. Position 141 is a phosphoserine (serine 141). The span at 149 to 178 shows a compositional bias: low complexity; that stretch reads PTGTPTRTPSRTAPGALTAKPPLAPKPGTT. Threonine 152 carries the phosphothreonine modification. The span at 179–189 shows a compositional bias: polar residues; it reads VASGVTARSAS. Arginine 186 bears the Omega-N-methylarginine mark. Low complexity predominate over residues 198-209; that stretch reads AAAATSASAGQA. Over residues 242–252 the composition is skewed to polar residues; that stretch reads NSQDLGSTSSL. Residues 360-548 enclose the Rab-GAP TBC domain; sequence GIPSSLRAKA…RVWDMFFCEG (189 aa). The interval 629–808 is disordered; the sequence is QYRPSRRLHG…SAEARQDAYF (180 aa). A compositionally biased stretch (low complexity) spans 655 to 676; it reads PSSSLLSLPGLKSRGSRAAGGA. Serine 658, serine 661, serine 678, and serine 687 each carry phosphoserine. Positions 684–696 are enriched in low complexity; sequence RRASAGPAPGPVV. Polar residues predominate over residues 707–718; sequence SPTGNSTPLGSS. Residues 716-782 adopt a coiled-coil conformation; that stretch reads GSSKETRKQE…KAQGRKLSLR (67 aa). Basic and acidic residues-rich tracts occupy residues 719–774 and 793–808; these read KETR…EKKA and DGGDRPSAEARQDAYF.

It is found in the cytoplasm. The protein localises to the cell membrane. Acts as a GTPase-activating protein for RAB3A, RAB22A, RAB27A, and RAB35. Does not act on RAB2A and RAB6A. The polypeptide is TBC1 domain family member 10B (TBC1D10B) (Homo sapiens (Human)).